The chain runs to 243 residues: Probable 2-phosphosulfolactate phosphatase (243 aa).

The protein belongs to the ComB family. Mg(2+) serves as cofactor.

It carries out the reaction (2R)-O-phospho-3-sulfolactate + H2O = (2R)-3-sulfolactate + phosphate. This Prochlorococcus marinus (strain MIT 9303) protein is Probable 2-phosphosulfolactate phosphatase.